Here is a 373-residue protein sequence, read N- to C-terminus: Probable leucine aminopeptidase 1 (373 aa).

The N-terminal stretch at 1–18 (MKLLSVLALSATATSVLG) is a signal peptide. Positions 176 and 195 each coordinate Zn(2+). Asparagine 196 carries an N-linked (GlcNAc...) asparagine glycan. Glutamate 234 and aspartate 261 together coordinate Zn(2+). A glycan (N-linked (GlcNAc...) asparagine) is linked at asparagine 288. A disulfide bridge links cysteine 310 with cysteine 314. Histidine 343 is a binding site for Zn(2+).

The protein belongs to the peptidase M28 family. M28E subfamily. As to quaternary structure, monomer. Zn(2+) is required as a cofactor.

The protein resides in the secreted. Functionally, extracellular aminopeptidase which contributes to pathogenicity. This Trichophyton verrucosum (strain HKI 0517) protein is Probable leucine aminopeptidase 1 (LAP1).